A 451-amino-acid polypeptide reads, in one-letter code: Trigger factor (451 aa).

In terms of domain architecture, PPIase FKBP-type spans 170-256; it reads DHIATIDYCE…LTALKYKDLP (87 aa).

This sequence belongs to the FKBP-type PPIase family. Tig subfamily.

Its subcellular location is the cytoplasm. It carries out the reaction [protein]-peptidylproline (omega=180) = [protein]-peptidylproline (omega=0). Involved in protein export. Acts as a chaperone by maintaining the newly synthesized protein in an open conformation. Functions as a peptidyl-prolyl cis-trans isomerase. The chain is Trigger factor from Treponema denticola (strain ATCC 35405 / DSM 14222 / CIP 103919 / JCM 8153 / KCTC 15104).